A 113-amino-acid polypeptide reads, in one-letter code: Ribosome-binding factor A (113 aa).

It belongs to the RbfA family. As to quaternary structure, monomer. Binds 30S ribosomal subunits, but not 50S ribosomal subunits or 70S ribosomes.

It localises to the cytoplasm. Its function is as follows. One of several proteins that assist in the late maturation steps of the functional core of the 30S ribosomal subunit. Associates with free 30S ribosomal subunits (but not with 30S subunits that are part of 70S ribosomes or polysomes). Required for efficient processing of 16S rRNA. May interact with the 5'-terminal helix region of 16S rRNA. The polypeptide is Ribosome-binding factor A (Lactococcus lactis subsp. cremoris (Streptococcus cremoris)).